Here is a 229-residue protein sequence, read N- to C-terminus: Adenylate kinase (229 aa).

ATP is bound at residue 10–15; sequence GSGKGT. Positions 30-59 are NMP; that stretch reads ESGVIFREHISKGTELGKQAKSYIDKGELV. Residues Ser-31, Arg-36, 57 to 59, 84 to 87, and Gln-91 each bind AMP; these read ELV and GFPR. Residues 125–164 are LID; sequence GRRICKTNNNHPNNVSIDSIKPDGNNCRVCHGELIVRTDD. Arg-126 is a binding site for ATP. The AMP site is built by Arg-161 and Arg-173. ATP is bound at residue Asn-209.

The protein belongs to the adenylate kinase family. As to quaternary structure, monomer.

Its subcellular location is the cytoplasm. It carries out the reaction AMP + ATP = 2 ADP. It participates in purine metabolism; AMP biosynthesis via salvage pathway; AMP from ADP: step 1/1. Catalyzes the reversible transfer of the terminal phosphate group between ATP and AMP. Plays an important role in cellular energy homeostasis and in adenine nucleotide metabolism. This chain is Adenylate kinase, found in Lawsonia intracellularis (strain PHE/MN1-00).